Consider the following 407-residue polypeptide: Glucose-1-phosphate adenylyltransferase 2 (407 aa).

Residues Y97, G162, 177–178, and S195 contribute to the alpha-D-glucose 1-phosphate site; that span reads EK.

It belongs to the bacterial/plant glucose-1-phosphate adenylyltransferase family. Homotetramer.

The catalysed reaction is alpha-D-glucose 1-phosphate + ATP + H(+) = ADP-alpha-D-glucose + diphosphate. Its pathway is glycan biosynthesis; glycogen biosynthesis. Involved in the biosynthesis of ADP-glucose, a building block required for the elongation reactions to produce glycogen. Catalyzes the reaction between ATP and alpha-D-glucose 1-phosphate (G1P) to produce pyrophosphate and ADP-Glc. This is Glucose-1-phosphate adenylyltransferase 2 from Vibrio cholerae serotype O1 (strain ATCC 39315 / El Tor Inaba N16961).